We begin with the raw amino-acid sequence, 145 residues long: MGTSFVGYLTFVLLLLALTKVRGGPAYNSPLSSDLSDLKGLLERLEDRLPVEEVETPVQDIFAPNYDSADSSNSAPSLTVEAARPGADMMYNRGSWTQQEKSSPLRNKLRELLNAPRSMRRSSDCFGSRIDRIGAQSGMGCGRRF.

A signal peptide spans 1-23; it reads MGTSFVGYLTFVLLLLALTKVRG. Residues 24–117 constitute a propeptide that is removed on maturation; the sequence is GPAYNSPLSS…KLRELLNAPR (94 aa). Cysteine 125 and cysteine 141 are disulfide-bonded.

Belongs to the natriuretic peptide family. In terms of processing, cleaved upon secretion to produce the functional hormone.

Its subcellular location is the secreted. Its function is as follows. Hormone playing a key role in cardiovascular homeostasis through regulation of natriuresis, diuresis, and vasodilation. Has a cGMP-stimulating activity. This Aquarana catesbeiana (American bullfrog) protein is Natriuretic peptides A.